The chain runs to 387 residues: ATP phosphoribosyltransferase regulatory subunit (387 aa).

Belongs to the class-II aminoacyl-tRNA synthetase family. HisZ subfamily. Heteromultimer composed of HisG and HisZ subunits.

It localises to the cytoplasm. The protein operates within amino-acid biosynthesis; L-histidine biosynthesis; L-histidine from 5-phospho-alpha-D-ribose 1-diphosphate: step 1/9. In terms of biological role, required for the first step of histidine biosynthesis. May allow the feedback regulation of ATP phosphoribosyltransferase activity by histidine. In Psychrobacter arcticus (strain DSM 17307 / VKM B-2377 / 273-4), this protein is ATP phosphoribosyltransferase regulatory subunit.